Reading from the N-terminus, the 440-residue chain is UDP-N-acetylmuramoylalanine--D-glutamate ligase (440 aa).

115-121 is an ATP binding site; the sequence is GSNGKST.

The protein belongs to the MurCDEF family.

It localises to the cytoplasm. It catalyses the reaction UDP-N-acetyl-alpha-D-muramoyl-L-alanine + D-glutamate + ATP = UDP-N-acetyl-alpha-D-muramoyl-L-alanyl-D-glutamate + ADP + phosphate + H(+). Its pathway is cell wall biogenesis; peptidoglycan biosynthesis. In terms of biological role, cell wall formation. Catalyzes the addition of glutamate to the nucleotide precursor UDP-N-acetylmuramoyl-L-alanine (UMA). This chain is UDP-N-acetylmuramoylalanine--D-glutamate ligase, found in Vibrio cholerae serotype O1 (strain ATCC 39541 / Classical Ogawa 395 / O395).